The sequence spans 704 residues: Elongation factor G (704 aa).

Positions 8–290 constitute a tr-type G domain; it reads ARYRNIGISA…AVIDYLPSPV (283 aa). GTP contacts are provided by residues 17–24, 88–92, and 142–145; these read AHIDAGKT, DTPGH, and NKMD.

It belongs to the TRAFAC class translation factor GTPase superfamily. Classic translation factor GTPase family. EF-G/EF-2 subfamily.

Its subcellular location is the cytoplasm. Catalyzes the GTP-dependent ribosomal translocation step during translation elongation. During this step, the ribosome changes from the pre-translocational (PRE) to the post-translocational (POST) state as the newly formed A-site-bound peptidyl-tRNA and P-site-bound deacylated tRNA move to the P and E sites, respectively. Catalyzes the coordinated movement of the two tRNA molecules, the mRNA and conformational changes in the ribosome. The chain is Elongation factor G from Cronobacter sakazakii (strain ATCC BAA-894) (Enterobacter sakazakii).